We begin with the raw amino-acid sequence, 609 residues long: Autophagy-related protein 22-1 (609 aa).

4 helical membrane-spanning segments follow: residues 35-55 (YGWA…PITL), 117-137 (TASF…ILII), 151-171 (LLLM…LGVV), and 176-196 (MVGA…FVLL). The segment covering 214–231 (AREPRPALDDSRAQEGHS) has biased composition (basic and acidic residues). The segment at 214 to 240 (AREPRPALDDSRAQEGHSDTTNGIEHG) is disordered. N244 carries N-linked (GlcNAc...) asparagine glycosylation. A helical membrane pass occupies residues 287-307 (IGIGYIGAIILQIVCILVVIA). A glycan (N-linked (GlcNAc...) asparagine) is linked at N309. Helical transmembrane passes span 317–337 (LVLF…ALWL), 381–401 (ILLF…VSGT), and 415–435 (AALG…AFSW). A glycan (N-linked (GlcNAc...) asparagine) is linked at N443. Transmembrane regions (helical) follow at residues 450–470 (IIAC…GFIP), 477–497 (FLGL…GLVM), 522–542 (ALYA…VGII), and 552–572 (AFVF…LVDV).

This sequence belongs to the ATG22 family.

The protein resides in the vacuole membrane. Its function is as follows. Vacuolar effluxer which mediate the efflux of amino acids resulting from autophagic degradation. The release of autophagic amino acids allows the maintenance of protein synthesis and viability during nitrogen starvation. In Aspergillus fumigatus (strain ATCC MYA-4609 / CBS 101355 / FGSC A1100 / Af293) (Neosartorya fumigata), this protein is Autophagy-related protein 22-1 (atg22-1).